A 524-amino-acid polypeptide reads, in one-letter code: Bifunctional purine biosynthesis protein PurH (524 aa).

Positions 1–145 constitute an MGS-like domain; sequence MIKQALLSVS…KNHRDVTVIV (145 aa).

This sequence belongs to the PurH family.

The catalysed reaction is (6R)-10-formyltetrahydrofolate + 5-amino-1-(5-phospho-beta-D-ribosyl)imidazole-4-carboxamide = 5-formamido-1-(5-phospho-D-ribosyl)imidazole-4-carboxamide + (6S)-5,6,7,8-tetrahydrofolate. The enzyme catalyses IMP + H2O = 5-formamido-1-(5-phospho-D-ribosyl)imidazole-4-carboxamide. The protein operates within purine metabolism; IMP biosynthesis via de novo pathway; 5-formamido-1-(5-phospho-D-ribosyl)imidazole-4-carboxamide from 5-amino-1-(5-phospho-D-ribosyl)imidazole-4-carboxamide (10-formyl THF route): step 1/1. Its pathway is purine metabolism; IMP biosynthesis via de novo pathway; IMP from 5-formamido-1-(5-phospho-D-ribosyl)imidazole-4-carboxamide: step 1/1. The polypeptide is Bifunctional purine biosynthesis protein PurH (Cupriavidus taiwanensis (strain DSM 17343 / BCRC 17206 / CCUG 44338 / CIP 107171 / LMG 19424 / R1) (Ralstonia taiwanensis (strain LMG 19424))).